A 284-amino-acid polypeptide reads, in one-letter code: Syntaxin-like protein psy1 (284 aa).

Residues 23–57 (EEIDHIRDAIRQIEDNVGRIEMLHQQSLQEIDEAN) are a coiled coil. Positions 181–243 (LREVQERHAD…GEGTQHMDRA (63 aa)) constitute a t-SNARE coiled-coil homology domain. The helical; Anchor for type IV membrane protein transmembrane segment at 260–280 (ICVVIICVIVAVLCGVLIPVL) threads the bilayer.

This sequence belongs to the syntaxin family.

Its subcellular location is the cell membrane. The protein localises to the prospore membrane. This is Syntaxin-like protein psy1 (psy1) from Schizosaccharomyces pombe (strain 972 / ATCC 24843) (Fission yeast).